The following is an 866-amino-acid chain: Glycoprotein gp2 (866 aa).

The first 25 residues, 1-25 (MGFIYARKLLLCMAVSIYAIGSTTT), serve as a signal peptide directing secretion. Disordered regions lie at residues 24 to 185 (TTTE…TDTT) and 319 to 619 (TAAT…IVPQ). The N-linked (GlcNAc...) asparagine; by host glycan is linked to N48. The segment covering 319–442 (TAATTTAATT…PDSSTGSTST (124 aa)) has biased composition (low complexity). Positions 443 to 463 (AEPSSTFTLTPSTATPSTDQF) are enriched in polar residues. 2 stretches are compositionally biased toward low complexity: residues 464-499 (TGSS…EAST) and 514-526 (TPDG…NTTP). N-linked (GlcNAc...) asparagine; by host glycosylation is present at N518. Residues 535–561 (FADTQQTPDNGVSTQHTTINDHTTANA) are compositionally biased toward polar residues. The segment covering 564–574 (HAGHHRGRAGG) has biased composition (basic residues). Residues N611 and N659 are each glycosylated (N-linked (GlcNAc...) asparagine; by host). The helical transmembrane segment at 835 to 855 (FALVAATTLTVTILCLLCCLY) threads the bilayer.

The protein resides in the virion membrane. Its function is as follows. Virulence factor. The polypeptide is Glycoprotein gp2 (Equus caballus (Horse)).